Consider the following 483-residue polypeptide: Glutamyl-tRNA(Gln) amidotransferase subunit A (483 aa).

Catalysis depends on charge relay system residues lysine 77 and serine 152. Catalysis depends on serine 176, which acts as the Acyl-ester intermediate.

It belongs to the amidase family. GatA subfamily. Heterotrimer of A, B and C subunits.

The catalysed reaction is L-glutamyl-tRNA(Gln) + L-glutamine + ATP + H2O = L-glutaminyl-tRNA(Gln) + L-glutamate + ADP + phosphate + H(+). Functionally, allows the formation of correctly charged Gln-tRNA(Gln) through the transamidation of misacylated Glu-tRNA(Gln) in organisms which lack glutaminyl-tRNA synthetase. The reaction takes place in the presence of glutamine and ATP through an activated gamma-phospho-Glu-tRNA(Gln). The chain is Glutamyl-tRNA(Gln) amidotransferase subunit A from Listeria innocua serovar 6a (strain ATCC BAA-680 / CLIP 11262).